The primary structure comprises 355 residues: Protein-glutamate methylesterase/protein-glutamine glutaminase 3 (355 aa).

The Response regulatory domain maps to 8–123; the sequence is SVLIVDDSGM…AREVEDFVDK (116 aa). Position 59 is a 4-aspartylphosphate (Asp59). The interval 139–161 is disordered; that stretch reads RSAPAAGPTPVPQAPPPPAAPPA. A compositionally biased stretch (pro residues) spans 145–159; that stretch reads GPTPVPQAPPPPAAP. The 191-residue stretch at 160–350 folds into the CheB-type methylesterase domain; the sequence is PAGDGGIIAI…ASLLEITGAS (191 aa). Residues Ser172, His199, and Asp292 contribute to the active site.

It belongs to the CheB family. Post-translationally, phosphorylated by CheA. Phosphorylation of the N-terminal regulatory domain activates the methylesterase activity.

Its subcellular location is the cytoplasm. The catalysed reaction is [protein]-L-glutamate 5-O-methyl ester + H2O = L-glutamyl-[protein] + methanol + H(+). The enzyme catalyses L-glutaminyl-[protein] + H2O = L-glutamyl-[protein] + NH4(+). In terms of biological role, involved in chemotaxis. Part of a chemotaxis signal transduction system that modulates chemotaxis in response to various stimuli. Catalyzes the demethylation of specific methylglutamate residues introduced into the chemoreceptors (methyl-accepting chemotaxis proteins or MCP) by CheR. Also mediates the irreversible deamidation of specific glutamine residues to glutamic acid. This is Protein-glutamate methylesterase/protein-glutamine glutaminase 3 from Paramagnetospirillum magneticum (strain ATCC 700264 / AMB-1) (Magnetospirillum magneticum).